A 349-amino-acid chain; its full sequence is Cell adhesion molecule CEACAM8 (349 aa).

An N-terminal signal peptide occupies residues 1 to 34; the sequence is MGPISAPSCRWRIPWQGLLLTASLFTFWNPPTTA. The Ig-like V-type domain occupies 35-142; that stretch reads QLTIEAVPSN…EVTGQFSVHP (108 aa). N-linked (GlcNAc...) asparagine glycans are attached at residues N104, N111, N115, N152, N173, N197, N224, N256, N274, N288, and N309. 2 Ig-like C2-type domains span residues 145–232 and 237–319; these read PKPS…VTLN and PDAP…ITVS. The cysteines at positions 167 and 215 are disulfide-linked. C259 and C299 are disulfide-bonded. D320 is lipidated: GPI-anchor amidated aspartate. Positions 321 to 349 are cleaved as a propeptide — removed in mature form; that stretch reads ALVQGSSPGLSARATVSIMIGVLARVALI.

This sequence belongs to the immunoglobulin superfamily. CEA family. In terms of assembly, monomer. Heterodimer with CEACAM6; heterodimerizes via its Ig-like V-type domain. Glycosylated. As to expression, expressed in leukocytes of chronic myeloid Leukemia patients and bone marrow.

It is found in the cell membrane. Its subcellular location is the cell surface. In terms of biological role, cell surface glycoprotein that plays a role in cell adhesion in a calcium-independent manner. Mediates heterophilic cell adhesion with other carcinoembryonic antigen-related cell adhesion molecules, such as CEACAM6. Heterophilic interaction with CEACAM8 occurs in activated neutrophils. The sequence is that of Cell adhesion molecule CEACAM8 from Homo sapiens (Human).